A 207-amino-acid polypeptide reads, in one-letter code: Cytochrome c biogenesis ATP-binding export protein CcmA (207 aa).

Positions 4 to 207 (LEARELLCER…RISLTQTRAA (204 aa)) constitute an ABC transporter domain. 36-43 (GSNGAGKT) serves as a coordination point for ATP.

It belongs to the ABC transporter superfamily. CcmA exporter (TC 3.A.1.107) family. The complex is composed of two ATP-binding proteins (CcmA) and two transmembrane proteins (CcmB).

It is found in the cell inner membrane. The catalysed reaction is heme b(in) + ATP + H2O = heme b(out) + ADP + phosphate + H(+). Its function is as follows. Part of the ABC transporter complex CcmAB involved in the biogenesis of c-type cytochromes; once thought to export heme, this seems not to be the case, but its exact role is uncertain. Responsible for energy coupling to the transport system. The polypeptide is Cytochrome c biogenesis ATP-binding export protein CcmA (Shigella flexneri).